Reading from the N-terminus, the 649-residue chain is MADDSGTENEGSGCTGWFMVEAIVQHPTGTQISDDEDEEVEDSGYDMVDFIDDSNITHNSLEAQALFNRQEADTHYATVQDLKRKYLGSPYVSPINTIAEAVESEISPRLDAIKLTRQPKKVKRRLFQTRELTDSGYGYSEVEAGTGTQVEKHGVPENGGDGQEKDTGRDIEGEEHTEAEAPTNSVREHAGTAGILELLKCKDLRAALLGKFKECFGLSFIDLIRPFKSDKTTCADWVVAGFGIHHSISEAFQKLIEPLSLYAHIQWLTNAWGMVLLVLVRFKVNKSRSTVARTLATLLNIPDNQMLIEPPKIQSGVAALYWFRTGISNASTVIGEAPEWITRQTVIEHGLADSQFKLTEMVQWAYDNDICEESEIAFEYAQRGDFDSNARAFLNSNMQAKYVKDCATMCRHYKHAEMRKMSIKQWIKHRGSKIEGTGNWKPIVQFLRHQNIEFIPFLSKFKLWLHGTPKKNCIAIVGPPDTGKSYFCMSLISFLGGTVISHVNSSSHFWLQPLVDAKVALLDDATQPCWIYMDTYMRNLLDGNPMSIDRKHKALTLIKCPPLLVTSNIDITKEEKYKYLHTRVTTFTFPNPFPFDRNGNAVYELSNANWKCFFERLSSSLDIQDSEDEEDGSNSQAFRCVPGTVVRTL.

Positions 83 to 85 match the Nuclear localization signal motif; it reads KRK. Residues Ser-89, Ser-93, and Ser-107 each carry the phosphoserine; by host modification. The Nuclear export signal signature appears at 106 to 115; the sequence is ISPRLDAIKL. The segment at 138 to 169 is disordered; sequence GYSEVEAGTGTQVEKHGVPENGGDGQEKDTGR. The interval 187–353 is DNA-binding region; sequence REHAGTAGIL…QTVIEHGLAD (167 aa). The region spanning 452–602 is the SF3 helicase domain; that stretch reads IEFIPFLSKF…FPFDRNGNAV (151 aa). 478–485 provides a ligand contact to ATP; it reads GPPDTGKS. Residue Lys-559 forms a Glycyl lysine isopeptide (Lys-Gly) (interchain with G-Cter in SUMO) linkage.

It belongs to the papillomaviridae E1 protein family. In terms of assembly, can form hexamers. Interacts with E2 protein; this interaction increases E1 DNA binding specificity. Interacts with host DNA polymerase subunit POLA2. Interacts with host single stranded DNA-binding protein RPA1. Interacts with host TOP1; this interaction stimulates the enzymatic activity of TOP1. Phosphorylated. In terms of processing, sumoylated.

It is found in the host nucleus. It carries out the reaction Couples ATP hydrolysis with the unwinding of duplex DNA by translocating in the 3'-5' direction.. It catalyses the reaction ATP + H2O = ADP + phosphate + H(+). ATP-dependent DNA 3'-5' helicase required for initiation of viral DNA replication. It forms a complex with the viral E2 protein. The E1-E2 complex binds to the replication origin which contains binding sites for both proteins. During the initial step, a dimer of E1 interacts with a dimer of protein E2 leading to a complex that binds the viral origin of replication with high specificity. Then, a second dimer of E1 displaces the E2 dimer in an ATP-dependent manner to form the E1 tetramer. Following this, two E1 monomers are added to each half of the site, which results in the formation of two E1 trimers on the viral ori. Subsequently, two hexamers will be created. The double hexamer acts as a bi-directional helicase machinery and unwinds the viral DNA and then recruits the host DNA polymerase to start replication. This chain is Replication protein E1, found in Homo sapiens (Human).